We begin with the raw amino-acid sequence, 499 residues long: Potassium voltage-gated channel subfamily A member 2 (499 aa).

The disordered stretch occupies residues 1-26 (MTVATEDPADEAAALPGHPQDTYDPE). The interval 1–125 (MTVATEDPAD…YELGEEAMEM (125 aa)) is tetramerization domain. Residues 1-160 (MTVATEDPAD…LLFEYPESSG (160 aa)) lie on the Cytoplasmic side of the membrane. Residues 161-182 (PARIIAIVSVMVILISIVSFCL) form a helical membrane-spanning segment. Over 183-221 (ETLPIFRDENEDMHGSGMTFHTYSNSTAGYQQSTSFTDP) the chain is Extracellular. The N-linked (GlcNAc...) asparagine glycan is linked to Asn-207. Residues 222-243 (FFIVETLCIIWFSFEFLVRFFA) form a helical membrane-spanning segment. A lipid anchor (S-palmitoyl cysteine) is attached at Cys-244. Residues 244–254 (CPSKAGFFTNI) lie on the Cytoplasmic side of the membrane. A helical membrane pass occupies residues 255–275 (MNIIDIVAIIPYFITLGTELA). Topologically, residues 276–289 (EKPEDAQQGQQAMS) are extracellular. Residues 290-310 (LAILRVIRLVRVFRIFKLSRH) form a helical; Voltage-sensor membrane-spanning segment. The Cytoplasmic segment spans residues 311–325 (SKGLQILGQTLKASM). The tract at residues 312 to 325 (KGLQILGQTLKASM) is S4-S5 linker. A helical membrane pass occupies residues 326 to 347 (RELGLLIFFLFIGVILFSSAVY). The Extracellular segment spans residues 348–361 (FAEADERDSQFPSI). Positions 362–373 (PDAFWWAVVSMT) form an intramembrane region, helical. Positions 374-379 (TVGYGD) match the Selectivity filter motif. The stretch at 374 to 381 (TVGYGDMV) is an intramembrane region. At 382-388 (PTTIGGK) the chain is on the extracellular side. The helical transmembrane segment at 389–417 (IVGSLCAIAGVLTIALPVPVIVSNFNYFY) threads the bilayer. Over 418 to 499 (HRETEGEEQA…VNITKMLTDV (82 aa)) the chain is Cytoplasmic. Residue Tyr-429 is modified to Phosphotyrosine. Phosphoserine is present on residues Ser-434, Ser-440, Ser-441, and Ser-449. Tyr-458 bears the Phosphotyrosine mark. The residue at position 468 (Ser-468) is a Phosphoserine. The PDZ-binding motif lies at 497-499 (TDV).

The protein belongs to the potassium channel family. A (Shaker) (TC 1.A.1.2) subfamily. Kv1.2/KCNA2 sub-subfamily. As to quaternary structure, homotetramer and heterotetramer with other channel-forming alpha subunits, such as KCNA1, KCNA4, KCNA5, KCNA6 and KCNA7. Channel activity is regulated by interaction with the beta subunits, including KCNAB1 and KCNAB2. Identified in a complex with KCNA1 and KCNAB2. Identified in a complex with KCNA4 and FYN. Identified in a complex with KCNA5 and KCNAB1. Interacts with the beta subunit KCNAB1. Interacts with PTK2B. Interacts (via C-terminus) with CTTN. Interacts (via N-terminal cytoplasmic domain) with RHOA (GTP-bound form); this regulates channel activity by reducing location at the cell surface in response to CHRM1 activation. Interacts with DRD2. Interacts with SIGMAR1; cocaine consumption leads to increased interaction. Interacts with ADAM22. Interacts with CNTNAP2. Interacts (via C-terminus) with the PDZ domains of DLG1, DLG2 and DLG4. Interacts with ADAM11. Interacts with LYNX1. In terms of processing, phosphorylated on tyrosine residues; phosphorylation increases in response to ischemia. Phosphorylated on tyrosine residues by activated PTK2B/PYK2. Phosphorylation on tyrosine residues suppresses ion channel activity. Phosphorylated on tyrosine residues in response to CHRM1 activation; this abolishes interaction with CTTN. This is probably due to endocytosis of the phosphorylated channel subunits. Phosphorylated on serine residues in response to increased cAMP levels; phosphorylation is apparently not catalyzed by PKA. N-glycosylated, with complex, sialylated N-glycans. As to expression, detected in portal vein myocytes (at protein level). Detected in portal vein. Brain, liver and kidney.

The protein resides in the cell membrane. The protein localises to the membrane. It localises to the cell projection. Its subcellular location is the axon. It is found in the synapse. The protein resides in the presynaptic cell membrane. The protein localises to the synaptosome. It localises to the endoplasmic reticulum membrane. Its subcellular location is the dendrite. It is found in the lamellipodium membrane. The protein resides in the cell junction. The protein localises to the paranodal septate junction. It carries out the reaction K(+)(in) = K(+)(out). Inhibited by 4-aminopyridine (4-AP). Inhibited by dendrotoxin (DTX) and charybdotoxin (CTX), but not by tetraethylammonium (TEA). Inhibited by tityustoxin-K alpha (TsTX-Kalpha), a toxin that is highly specific for KCNA2. Inhibited by maurotoxin. Inhibited by kappaM conotoxins kappaM-RIIIJ and kappaM-RIIIK. Voltage-gated potassium channel that mediates transmembrane potassium transport in excitable membranes, primarily in the brain and the central nervous system, but also in the cardiovascular system. Prevents aberrant action potential firing and regulates neuronal output. Forms tetrameric potassium-selective channels through which potassium ions pass in accordance with their electrochemical gradient. The channel alternates between opened and closed conformations in response to the voltage difference across the membrane. Can form functional homotetrameric channels and heterotetrameric channels that contain variable proportions of KCNA1, KCNA2, KCNA4, KCNA5, KCNA6, KCNA7, and possibly other family members as well; channel properties depend on the type of alpha subunits that are part of the channel. Channel properties are modulated by cytoplasmic beta subunits that regulate the subcellular location of the alpha subunits and promote rapid inactivation of delayed rectifier potassium channels. In vivo, membranes probably contain a mixture of heteromeric potassium channel complexes, making it difficult to assign currents observed in intact tissues to any particular potassium channel family member. Homotetrameric KCNA2 forms a delayed-rectifier potassium channel that opens in response to membrane depolarization, followed by slow spontaneous channel closure. In contrast, a heteromultimer formed by KCNA2 and KCNA4 shows rapid inactivation. Regulates neuronal excitability and plays a role as pacemaker in the regulation of neuronal action potentials. KCNA2-containing channels play a presynaptic role and prevent hyperexcitability and aberrant action potential firing. Response to toxins that are selective for KCNA2-containing potassium channels suggests that in Purkinje cells, dendritic subthreshold KCNA2-containing potassium channels prevent random spontaneous calcium spikes, suppressing dendritic hyperexcitability without hindering the generation of somatic action potentials, and thereby play an important role in motor coordination. Plays a role in the induction of long-term potentiation of neuron excitability in the CA3 layer of the hippocampus. May function as down-stream effector for G protein-coupled receptors and inhibit GABAergic inputs to basolateral amygdala neurons. May contribute to the regulation of neurotransmitter release, such as gamma-aminobutyric acid (GABA). Contributes to the regulation of the axonal release of the neurotransmitter dopamine. Reduced KCNA2 expression plays a role in the perception of neuropathic pain after peripheral nerve injury, but not acute pain. Plays a role in the regulation of the time spent in non-rapid eye movement (NREM) sleep. This chain is Potassium voltage-gated channel subfamily A member 2 (KCNA2), found in Oryctolagus cuniculus (Rabbit).